A 237-amino-acid polypeptide reads, in one-letter code: Uridylate kinase (237 aa).

Residue 11-14 (KLSG) coordinates ATP. Position 53 (G53) interacts with UMP. The ATP site is built by G54 and R58. UMP contacts are provided by residues D73 and 134–141 (TGNPFFTT). 3 residues coordinate ATP: T161, Y167, and D170.

It belongs to the UMP kinase family. As to quaternary structure, homohexamer.

The protein localises to the cytoplasm. The catalysed reaction is UMP + ATP = UDP + ADP. It functions in the pathway pyrimidine metabolism; CTP biosynthesis via de novo pathway; UDP from UMP (UMPK route): step 1/1. With respect to regulation, inhibited by UTP. In terms of biological role, catalyzes the reversible phosphorylation of UMP to UDP. The polypeptide is Uridylate kinase (Burkholderia ambifaria (strain ATCC BAA-244 / DSM 16087 / CCUG 44356 / LMG 19182 / AMMD) (Burkholderia cepacia (strain AMMD))).